We begin with the raw amino-acid sequence, 22 residues long: Cytin chain B (22 aa).

The protein belongs to the protease inhibitor I13 (potato type I serine protease inhibitor) family. As to quaternary structure, heterodimer of an A chain and a B chain, linked by a disulfide bond.

Functionally, inhibitor of chymotrypsin. The chain is Cytin chain B from Theromyzon tessulatum (Duck leech).